We begin with the raw amino-acid sequence, 454 residues long: Bifunctional protein GlmU (454 aa).

The segment at 1–225 (MNIVILAAGM…LWETLGVNSK (225 aa)) is pyrophosphorylase. Residues 6 to 9 (LAAG), K20, Q71, 76 to 77 (GT), 98 to 100 (YGD), G135, E150, N165, and N223 each bind UDP-N-acetyl-alpha-D-glucosamine. Residue D100 coordinates Mg(2+). N223 is a binding site for Mg(2+). Positions 226-246 (VQLAEIERIHQRNIAQRLLEA) are linker. The N-acetyltransferase stretch occupies residues 247 to 454 (GVTLLDPARI…WQRPVKQPKK (208 aa)). UDP-N-acetyl-alpha-D-glucosamine is bound by residues R329 and K347. Catalysis depends on H359, which acts as the Proton acceptor. The UDP-N-acetyl-alpha-D-glucosamine site is built by Y362 and N373. Acetyl-CoA is bound by residues A376, 382-383 (NY), S401, A419, and R436.

The protein in the N-terminal section; belongs to the N-acetylglucosamine-1-phosphate uridyltransferase family. In the C-terminal section; belongs to the transferase hexapeptide repeat family. Homotrimer. Mg(2+) is required as a cofactor.

The protein localises to the cytoplasm. It carries out the reaction alpha-D-glucosamine 1-phosphate + acetyl-CoA = N-acetyl-alpha-D-glucosamine 1-phosphate + CoA + H(+). It catalyses the reaction N-acetyl-alpha-D-glucosamine 1-phosphate + UTP + H(+) = UDP-N-acetyl-alpha-D-glucosamine + diphosphate. Its pathway is nucleotide-sugar biosynthesis; UDP-N-acetyl-alpha-D-glucosamine biosynthesis; N-acetyl-alpha-D-glucosamine 1-phosphate from alpha-D-glucosamine 6-phosphate (route II): step 2/2. It participates in nucleotide-sugar biosynthesis; UDP-N-acetyl-alpha-D-glucosamine biosynthesis; UDP-N-acetyl-alpha-D-glucosamine from N-acetyl-alpha-D-glucosamine 1-phosphate: step 1/1. The protein operates within bacterial outer membrane biogenesis; LPS lipid A biosynthesis. Functionally, catalyzes the last two sequential reactions in the de novo biosynthetic pathway for UDP-N-acetylglucosamine (UDP-GlcNAc). The C-terminal domain catalyzes the transfer of acetyl group from acetyl coenzyme A to glucosamine-1-phosphate (GlcN-1-P) to produce N-acetylglucosamine-1-phosphate (GlcNAc-1-P), which is converted into UDP-GlcNAc by the transfer of uridine 5-monophosphate (from uridine 5-triphosphate), a reaction catalyzed by the N-terminal domain. This chain is Bifunctional protein GlmU, found in Cupriavidus metallidurans (strain ATCC 43123 / DSM 2839 / NBRC 102507 / CH34) (Ralstonia metallidurans).